An 87-amino-acid chain; its full sequence is Small ribosomal subunit protein bS18 (87 aa).

A compositionally biased stretch (basic and acidic residues) spans 1-20 (MAGKSSGDRRKPIRKGKDGK). Residues 1–24 (MAGKSSGDRRKPIRKGKDGKNAAP) form a disordered region.

Belongs to the bacterial ribosomal protein bS18 family. Part of the 30S ribosomal subunit. Forms a tight heterodimer with protein bS6.

Its function is as follows. Binds as a heterodimer with protein bS6 to the central domain of the 16S rRNA, where it helps stabilize the platform of the 30S subunit. This chain is Small ribosomal subunit protein bS18, found in Leifsonia xyli subsp. xyli (strain CTCB07).